Here is a 372-residue protein sequence, read N- to C-terminus: RNA polymerase sigma factor SigA (372 aa).

The sigma-70 factor domain-2 stretch occupies residues 139-209 (LAEANLRLVV…TRAIADQART (71 aa)). Positions 163–166 (DLIQ) match the Interaction with polymerase core subunit RpoC motif. The interval 218-294 (ETINKLIRVQ…DQDALAPSDA (77 aa)) is sigma-70 factor domain-3. The interval 307–360 (VLDTLTDREENVLRLRFGLDDGRTRTLEEVGKVFGVTRERIRQIEAKALRKLRH) is sigma-70 factor domain-4. The segment at residues 333-352 (LEEVGKVFGVTRERIRQIEA) is a DNA-binding region (H-T-H motif).

It belongs to the sigma-70 factor family. RpoD/SigA subfamily. Interacts transiently with the RNA polymerase catalytic core.

It localises to the cytoplasm. Its function is as follows. Sigma factors are initiation factors that promote the attachment of RNA polymerase to specific initiation sites and are then released. This sigma factor is the primary sigma factor during exponential growth. This Halalkalibacterium halodurans (strain ATCC BAA-125 / DSM 18197 / FERM 7344 / JCM 9153 / C-125) (Bacillus halodurans) protein is RNA polymerase sigma factor SigA.